Here is a 495-residue protein sequence, read N- to C-terminus: Putative aldehyde dehydrogenase AldA (495 aa).

NAD(+) is bound at residue 212 to 218; it reads GKGSESG. Catalysis depends on residues glutamate 256 and cysteine 290.

It belongs to the aldehyde dehydrogenase family.

It catalyses the reaction an aldehyde + NAD(+) + H2O = a carboxylate + NADH + 2 H(+). The protein is Putative aldehyde dehydrogenase AldA (aldA) of Staphylococcus aureus (strain USA300).